The primary structure comprises 337 residues: Glyceraldehyde-3-phosphate dehydrogenase (337 aa).

NAD(+) is bound by residues 12 to 13 (RI), D34, and R79. Residues 150 to 152 (SCT), T181, 210 to 211 (TG), and R233 each bind D-glyceraldehyde 3-phosphate. The active-site Nucleophile is the C151. N315 lines the NAD(+) pocket.

It belongs to the glyceraldehyde-3-phosphate dehydrogenase family. Homotetramer.

Its subcellular location is the cytoplasm. It carries out the reaction D-glyceraldehyde 3-phosphate + phosphate + NAD(+) = (2R)-3-phospho-glyceroyl phosphate + NADH + H(+). Its pathway is carbohydrate degradation; glycolysis; pyruvate from D-glyceraldehyde 3-phosphate: step 1/5. This Ajellomyces capsulatus (Darling's disease fungus) protein is Glyceraldehyde-3-phosphate dehydrogenase (GPD).